The following is a 475-amino-acid chain: Aspartic proteinase 39 (475 aa).

The N-terminal stretch at 1 to 23 is a signal peptide; sequence MELRRKLCIVVAVFVIVIEFASA. Residues 74-422 enclose the Peptidase A1 domain; it reads YFTKIKLGSP…DLDNEVIGWA (349 aa). Residue aspartate 92 is part of the active site. N-linked (GlcNAc...) asparagine glycosylation is found at asparagine 124 and asparagine 222. Residue aspartate 303 is part of the active site. N-linked (GlcNAc...) asparagine glycans are attached at residues asparagine 425 and asparagine 446. Serine 449 carries the GPI-anchor amidated serine lipid modification. A propeptide spans 450–475 (removed in mature form); that stretch reads APRLLMITKLLTILSPLIVMAFTSLA.

Belongs to the peptidase A1 family. In terms of tissue distribution, highly expressed in pollen and pollen tubes. Mostly expressed in inflorescence, flowers and siliques, and barely in leaves and seedlings.

Its subcellular location is the cell membrane. It localises to the cytoplasm. It is found in the cytosol. Functionally, displays aspartic proteolytic activity. Together with A36, contributes to pollen and ovule development, including the apical cell wall constitution of the growing pollen tubes. The sequence is that of Aspartic proteinase 39 from Arabidopsis thaliana (Mouse-ear cress).